A 115-amino-acid polypeptide reads, in one-letter code: Large ribosomal subunit protein uL24 (115 aa).

Belongs to the universal ribosomal protein uL24 family. As to quaternary structure, part of the 50S ribosomal subunit.

In terms of biological role, one of two assembly initiator proteins, it binds directly to the 5'-end of the 23S rRNA, where it nucleates assembly of the 50S subunit. Functionally, one of the proteins that surrounds the polypeptide exit tunnel on the outside of the subunit. The sequence is that of Large ribosomal subunit protein uL24 from Amoebophilus asiaticus (strain 5a2).